A 208-amino-acid polypeptide reads, in one-letter code: UPF0711 protein C18orf21 homolog (208 aa).

Residues 123–137 show a composition bias toward basic residues; sequence SKHKSTPGSASKHRT. 2 disordered regions span residues 123-180 and 189-208; these read SKHK…KSSP and MLEN…LSSL. Positions 138-152 are enriched in polar residues; that stretch reads PQTVNWATPKSVANR. Low complexity predominate over residues 153–180; sequence TPSSTPRSASSNTSSSSSSKSSSVKSSP.

The protein belongs to the UPF0711 family.

This Danio rerio (Zebrafish) protein is UPF0711 protein C18orf21 homolog.